A 372-amino-acid chain; its full sequence is Mevalonate 3,5-bisphosphate decarboxylase (372 aa).

This sequence belongs to the mevalonate 3,5-bisphosphate decarboxylase family. Homodimer.

It catalyses the reaction (R)-3,5-bisphosphomevalonate + H(+) = isopentenyl phosphate + phosphate + CO2. It functions in the pathway isoprenoid biosynthesis; isopentenyl diphosphate biosynthesis via mevalonate pathway. Functionally, catalyzes the ATP-independent decarboxylation of (R)-mevalonate 3,5-bisphosphate to isopentenyl phosphate. Functions in an alternative mevalonate pathway, only present in extreme acidophiles of the Thermoplasmatales order, which passes through mevalonate 3-phosphate rather than mevalonate 5-phosphate. In Thermoplasma volcanium (strain ATCC 51530 / DSM 4299 / JCM 9571 / NBRC 15438 / GSS1), this protein is Mevalonate 3,5-bisphosphate decarboxylase.